Reading from the N-terminus, the 267-residue chain is Glutamate racemase (267 aa).

Substrate is bound by residues 10 to 11 (DS) and 42 to 43 (YG). Cysteine 73 functions as the Proton donor/acceptor in the catalytic mechanism. Position 74 to 75 (74 to 75 (NT)) interacts with substrate. Catalysis depends on cysteine 183, which acts as the Proton donor/acceptor. Position 184–185 (184–185 (TH)) interacts with substrate.

Belongs to the aspartate/glutamate racemases family.

The enzyme catalyses L-glutamate = D-glutamate. Its pathway is cell wall biogenesis; peptidoglycan biosynthesis. In terms of biological role, provides the (R)-glutamate required for cell wall biosynthesis. In Lactobacillus acidophilus (strain ATCC 700396 / NCK56 / N2 / NCFM), this protein is Glutamate racemase.